The chain runs to 472 residues: 3-isopropylmalate dehydratase large subunit (472 aa).

[4Fe-4S] cluster contacts are provided by cysteine 347, cysteine 407, and cysteine 410.

Belongs to the aconitase/IPM isomerase family. LeuC type 1 subfamily. As to quaternary structure, heterodimer of LeuC and LeuD. [4Fe-4S] cluster serves as cofactor.

The enzyme catalyses (2R,3S)-3-isopropylmalate = (2S)-2-isopropylmalate. Its pathway is amino-acid biosynthesis; L-leucine biosynthesis; L-leucine from 3-methyl-2-oxobutanoate: step 2/4. Catalyzes the isomerization between 2-isopropylmalate and 3-isopropylmalate, via the formation of 2-isopropylmaleate. The protein is 3-isopropylmalate dehydratase large subunit of Bacillus velezensis (strain DSM 23117 / BGSC 10A6 / LMG 26770 / FZB42) (Bacillus amyloliquefaciens subsp. plantarum).